Here is a 491-residue protein sequence, read N- to C-terminus: Chromosomal replication initiator protein DnaA (491 aa).

Residues 1–69 (MTTWDKCLKK…TIQECHGNDL (69 aa)) form a domain I, interacts with DnaA modulators region. The interval 69 to 154 (LIIEYSNKKF…KEDEEYSFGL (86 aa)) is domain II. Residues 155–371 (PLKEKYVFDS…GALNRVLTTS (217 aa)) form a domain III, AAA+ region region. Positions 199, 201, 202, and 203 each coordinate ATP. Residues 372-491 (KFNHKDPTIE…YELLLDKISR (120 aa)) form a domain IV, binds dsDNA region.

It belongs to the DnaA family. In terms of assembly, oligomerizes as a right-handed, spiral filament on DNA at oriC.

Its subcellular location is the cytoplasm. Plays an essential role in the initiation and regulation of chromosomal replication. ATP-DnaA binds to the origin of replication (oriC) to initiate formation of the DNA replication initiation complex once per cell cycle. Binds the DnaA box (a 9 base pair repeat at the origin) and separates the double-stranded (ds)DNA. Forms a right-handed helical filament on oriC DNA; dsDNA binds to the exterior of the filament while single-stranded (ss)DNA is stabiized in the filament's interior. The ATP-DnaA-oriC complex binds and stabilizes one strand of the AT-rich DNA unwinding element (DUE), permitting loading of DNA polymerase. After initiation quickly degrades to an ADP-DnaA complex that is not apt for DNA replication. Binds acidic phospholipids. In Francisella tularensis subsp. holarctica (strain LVS), this protein is Chromosomal replication initiator protein DnaA.